The sequence spans 308 residues: GTP-binding protein RAD (308 aa).

A compositionally biased stretch (gly residues) spans 1–16 (MTLNGGGSGAGGSRGG). The tract at residues 1 to 88 (MTLNGGGSGA…SLSSGGSDSD (88 aa)) is disordered. Arg24 is subject to Omega-N-methylarginine. At Ser26 the chain carries Phosphoserine. Positions 48–68 (QAALTPGALTAAAAGTGTQGP) are enriched in low complexity. Residues 98–105 (GAPGVGKS) and 203–206 (NKSD) each bind GTP. The tract at residues 278–297 (AKRFLGRIVARNSRKMAFRA) is calmodulin-binding.

It belongs to the small GTPase superfamily. RGK family. In terms of assembly, interacts with calmodulin preferentially in the inactive, GDP-bound form. Binds CAMKII which is capable of phosphorylating RAD in vitro. Interacts with CAMK2D. Interacts with CACNB2; interaction may be involved in beta-adrenergic regulation of heart rate and contractile force. Interaction with CACNB2 regulates the trafficking of CACNA1C to the cell membrane. Most abundantly expressed in the heart. Also found in the skeletal muscle and lung. Lesser amounts in placenta and kidney. Also detected in adipose tissue. Overexpressed in muscle of type II diabetic humans.

The protein resides in the cell membrane. Its function is as follows. May regulate basal voltage-dependent L-type Ca(2+) currents and be required for beta-adrenergic augmentation of Ca(2+) influx in cardiomyocytes, thereby regulating increases in heart rate and contractile force. May play an important role in cardiac antiarrhythmia via the strong suppression of voltage-gated L-type Ca(2+) currents. Regulates voltage-dependent L-type calcium channel subunit alpha-1C trafficking to the cell membrane. Inhibits cardiac hypertrophy through the calmodulin-dependent kinase II (CaMKII) pathway. Inhibits phosphorylation and activation of CAMK2D. In Homo sapiens (Human), this protein is GTP-binding protein RAD (RRAD).